We begin with the raw amino-acid sequence, 22 residues long: SASPGLPKGEKEQQEAIEHIDE.

Residues 1 to 22 (SASPGLPKGEKEQQEAIEHIDE) form a disordered region. Basic and acidic residues predominate over residues 8-22 (KGEKEQQEAIEHIDE).

This sequence to human SET/PHAPII protein. In terms of assembly, oligomer.

It localises to the cytoplasm. Functionally, has a role in the physiological regulation of fucosylation processes. In Rattus norvegicus (Rat), this protein is Fuctinin-1.